The primary structure comprises 418 residues: Tyrosine--tRNA ligase (418 aa).

Tyr-34 provides a ligand contact to L-tyrosine. The 'HIGH' region signature appears at 39–48; the sequence is PTADSLHLGH. L-tyrosine-binding residues include Tyr-169 and Gln-173. Residues 229-233 carry the 'KMSKS' region motif; that stretch reads KFGKS. Position 232 (Lys-232) interacts with ATP. The S4 RNA-binding domain occupies 352–418; it reads LNLVDMLVTA…GKKKYAVLTY (67 aa).

The protein belongs to the class-I aminoacyl-tRNA synthetase family. TyrS type 1 subfamily. As to quaternary structure, homodimer.

Its subcellular location is the cytoplasm. The catalysed reaction is tRNA(Tyr) + L-tyrosine + ATP = L-tyrosyl-tRNA(Tyr) + AMP + diphosphate + H(+). Catalyzes the attachment of tyrosine to tRNA(Tyr) in a two-step reaction: tyrosine is first activated by ATP to form Tyr-AMP and then transferred to the acceptor end of tRNA(Tyr). In Streptococcus pyogenes serotype M3 (strain SSI-1), this protein is Tyrosine--tRNA ligase.